The following is a 309-amino-acid chain: Cell division protein FtsQ (309 aa).

At Met-1–His-52 the chain is on the cytoplasmic side. The chain crosses the membrane as a helical span at residues Thr-53–Gly-74. Residues His-75–Ile-309 are Periplasmic-facing. One can recognise a POTRA domain in the interval Phe-89–Arg-157.

This sequence belongs to the FtsQ/DivIB family. FtsQ subfamily.

It localises to the cell inner membrane. Functionally, essential cell division protein. The protein is Cell division protein FtsQ of Rhizobium meliloti (strain 1021) (Ensifer meliloti).